The following is a 135-amino-acid chain: MLRTLLKSKIHRATVTDCELHYEGSCAIDEDLLDAANLLENEQIHIWNINNGERFVTYAIRGERGTGIISVNGSAARRAAVGDLIIIAAFAQVPEAQLDGFKPQLVFVDANNRVQHQRSHIPVQAAAHPQEGRPS.

Catalysis depends on Ser-25, which acts as the Schiff-base intermediate with substrate; via pyruvic acid. Pyruvic acid (Ser) is present on Ser-25. Thr-57 lines the substrate pocket. Tyr-58 acts as the Proton donor in catalysis. Residue Gly-73–Ala-75 participates in substrate binding.

Belongs to the PanD family. As to quaternary structure, heterooctamer of four alpha and four beta subunits. Requires pyruvate as cofactor. In terms of processing, is synthesized initially as an inactive proenzyme, which is activated by self-cleavage at a specific serine bond to produce a beta-subunit with a hydroxyl group at its C-terminus and an alpha-subunit with a pyruvoyl group at its N-terminus.

It is found in the cytoplasm. The catalysed reaction is L-aspartate + H(+) = beta-alanine + CO2. It participates in cofactor biosynthesis; (R)-pantothenate biosynthesis; beta-alanine from L-aspartate: step 1/1. Functionally, catalyzes the pyruvoyl-dependent decarboxylation of aspartate to produce beta-alanine. This Albidiferax ferrireducens (strain ATCC BAA-621 / DSM 15236 / T118) (Rhodoferax ferrireducens) protein is Aspartate 1-decarboxylase.